Consider the following 1756-residue polypeptide: RANBP2-like and GRIP domain-containing protein 2 (1756 aa).

Ser-21 bears the Phosphoserine mark. TPR repeat units lie at residues 59-92, 583-616, and 647-680; these read PRAH…NPPQ, QKMG…LKII, and EDAH…VSYW. Residues 759 to 804 are disordered; it reads GPLYKNGSLRNADSEIKHSTPSPTKYSLSPSKSYKYSPKTPPRWAE. Low complexity predominate over residues 777 to 796; sequence STPSPTKYSLSPSKSYKYSP. Residues 1029–1165 enclose the RanBD1 1 domain; that stretch reads HFEPVVQMPE…FEECQRLLLD (137 aa). Disordered stretches follow at residues 1206 to 1241 and 1299 to 1324; these read TKVT…TLEW and AKLN…ERDG. A compositionally biased stretch (polar residues) spans 1228–1237; the sequence is IKPNPENTGP. The segment covering 1310–1322 has biased composition (acidic residues); the sequence is TDEESDVTQEEER. Residues 1326-1462 form the RanBD1 2 domain; the sequence is YFEPVVPLPD…FDEAKTAQEK (137 aa). Residues 1573–1586 are compositionally biased toward polar residues; that stretch reads NDSETSSVAQSGSE. The segment at 1573–1614 is disordered; sequence NDSETSSVAQSGSESKVEPKKCELSKNSDIEQSSDSKVKNLS. Basic and acidic residues predominate over residues 1587 to 1610; it reads SKVEPKKCELSKNSDIEQSSDSKV. One can recognise a GRIP domain in the interval 1693 to 1743; the sequence is QEESAANVEHLKNVLLQFIFLKPGSERESLLPVINTMLQLSPEEKGKLAAV.

This is RANBP2-like and GRIP domain-containing protein 2 (RGPD2) from Homo sapiens (Human).